The chain runs to 142 residues: Hemoglobin subunit alpha (142 aa).

Position 1 is an N-acetylserine (S1). The Globin domain occupies 1–142; sequence SLSDKDKADV…LALALGQKYR (142 aa). Residue H58 coordinates O2. Position 88 (H88) interacts with heme b.

The protein belongs to the globin family. In terms of assembly, heterotetramer of two alpha chains and two beta chains. As to expression, red blood cells.

Its function is as follows. Involved in oxygen transport from gills to the various peripheral tissues. In Catostomus clarkii (Desert sucker), this protein is Hemoglobin subunit alpha (hba).